Consider the following 518-residue polypeptide: Vesicular inhibitory amino acid transporter (518 aa).

Over 1–125 the chain is Cytoplasmic; it reads MATLIRSKLS…WNVTNAIQGM (125 aa). Residues 126–146 traverse the membrane as a helical segment; it reads FVLGLPYAILHGGYLGLFLII. At 147-197 the chain is on the lumenal, vesicle side; the sequence is FAAVVCCYTGKILIACLYEENEDGETVRVRDSYVDIANACCAPRFPKLGGR. Residues 198 to 218 form a helical membrane-spanning segment; it reads VVNVAQIIELVMTCILYVVVS. Over 219–258 the chain is Cytoplasmic; sequence GNLMYNSFPNLPISQKSWSIMATAVLLPCAFLKNLKAVSK. Residues 259–279 traverse the membrane as a helical segment; it reads FSLLCTVAHFVINILVIAYCL. Residues 280–298 lie on the Lumenal, vesicle side of the membrane; it reads SRARDWAWDKVKFYIDVKK. Residues 299 to 319 traverse the membrane as a helical segment; sequence FPISIGIIVFSYTSQIFLPSL. At 320 to 334 the chain is on the cytoplasmic side; the sequence is EGNMQSPREFHCMMN. Residues 335-355 traverse the membrane as a helical segment; that stretch reads WTHIAACILKGLFALVAYLTW. Over 356 to 376 the chain is Lumenal, vesicle; that stretch reads ADETKEVITDNLPSTIRAVVN. A helical transmembrane segment spans residues 377-397; that stretch reads LFLVSKALLSYPLPFFAAVEV. The Cytoplasmic segment spans residues 398–431; the sequence is LEKSLFQEGARAFFPNCYGGDGRLKSWGLTLRCA. A helical transmembrane segment spans residues 432–452; it reads LVVFTLLMAIYVPHFALLMGL. Residues 453–454 lie on the Lumenal, vesicle side of the membrane; it reads TG. A helical membrane pass occupies residues 455 to 475; sequence SLTGAGLCFLLPSLFHLKLMW. At 476 to 482 the chain is on the cytoplasmic side; the sequence is RQLLWHQ. A helical transmembrane segment spans residues 483-503; sequence VFFDVSIFVIGSICSVSGFVH. Residues 504–518 lie on the Lumenal, vesicle side of the membrane; it reads SLEGLIEAYAYNIED.

This sequence belongs to the amino acid/polyamine transporter 2 family. As to expression, initially expressed in late neurula stages in the anterior spinal cord. By early tailbud stages, expression extends posteriorly along the entire developing spinal cord and appears in the hindbrain. In late tailbud embryos, expressed in the forebrain, midbrain, hindbrain, spinal cord and retina. In swimming tadpoles, expressed in an extended and more intense pattern including interneurons.

The protein localises to the cytoplasmic vesicle membrane. It is found in the presynapse. The enzyme catalyses 4-aminobutanoate(out) + n H(+)(in) = 4-aminobutanoate(in) + n H(+)(out). It catalyses the reaction glycine(out) + n H(+)(in) = glycine(in) + n H(+)(out). The catalysed reaction is beta-alanine(out) + n H(+)(in) = beta-alanine(in) + n H(+)(out). Functionally, antiporter that exchanges vesicular protons for cytosolic 4-aminobutanoate or to a lesser extend glycine, thus allowing their secretion from nerve terminals. The transport is equally dependent on the chemical and electrical components of the proton gradient. May also transport beta-alanine. Acidification of GABAergic synaptic vesicles is a prerequisite for 4-aminobutanoate uptake. The polypeptide is Vesicular inhibitory amino acid transporter (Xenopus laevis (African clawed frog)).